Consider the following 187-residue polypeptide: Large ribosomal subunit protein mL49 (187 aa).

Belongs to the mitochondrion-specific ribosomal protein mL49 family.

The protein localises to the mitochondrion. The polypeptide is Large ribosomal subunit protein mL49 (mrpl-49) (Caenorhabditis elegans).